The sequence spans 162 residues: MTAIQQFFKTFFLTELLKGLALTGRYTFKRKFTVQFPEEKTPISPRFRGLHALRRYENGEERCIACKLCEAVCPAMAITIESETRADNTRRTTRYDIDLTKCIFCGFCEESCPVDSIVETQILEYHGEKRGDLYFTKEMLLAVGDRYEKEIAAAKAADARYR.

4Fe-4S ferredoxin-type domains follow at residues R54–E83 and T93–I122. Residues C63, C66, C69, C73, C102, C105, C108, and C112 each coordinate [4Fe-4S] cluster.

The protein belongs to the complex I 23 kDa subunit family. As to quaternary structure, NDH-1 is composed of 14 different subunits. Subunits NuoA, H, J, K, L, M, N constitute the membrane sector of the complex. Requires [4Fe-4S] cluster as cofactor.

Its subcellular location is the cell inner membrane. The enzyme catalyses a quinone + NADH + 5 H(+)(in) = a quinol + NAD(+) + 4 H(+)(out). In terms of biological role, NDH-1 shuttles electrons from NADH, via FMN and iron-sulfur (Fe-S) centers, to quinones in the respiratory chain. The immediate electron acceptor for the enzyme in this species is believed to be ubiquinone. Couples the redox reaction to proton translocation (for every two electrons transferred, four hydrogen ions are translocated across the cytoplasmic membrane), and thus conserves the redox energy in a proton gradient. This Burkholderia thailandensis (strain ATCC 700388 / DSM 13276 / CCUG 48851 / CIP 106301 / E264) protein is NADH-quinone oxidoreductase subunit I.